The primary structure comprises 485 residues: Protein LAZ1 (485 aa).

Over M1 to W19 the chain is Cytoplasmic. The helical transmembrane segment at A20 to F40 threads the bilayer. Residues D41–K53 lie on the Lumenal side of the membrane. The chain crosses the membrane as a helical span at residues F54 to V74. The Cytoplasmic segment spans residues K75 to Y167. A helical membrane pass occupies residues M168 to C188. The Lumenal segment spans residues E189–C196. A helical membrane pass occupies residues G197–V217. The Cytoplasmic segment spans residues Q218–S241. Residues I242 to F262 traverse the membrane as a helical segment. The Lumenal segment spans residues K263–Q277. The helical transmembrane segment at D278–A298 threads the bilayer. At K299 to D485 the chain is on the cytoplasmic side. A coiled-coil region spans residues M384 to D415. The segment at Q400 to D485 is disordered. Residues K403–S416 show a composition bias toward basic and acidic residues. The span at G455 to Q469 shows a compositional bias: polar residues. Residues V476–D485 are compositionally biased toward basic and acidic residues.

It belongs to the TMEM184 family.

Its subcellular location is the endomembrane system. The protein localises to the cell membrane. It localises to the cytoplasm. The protein resides in the cytosol. Required for programmed cell death (PCD) associated with hypersensitive response (HR). Involved both in the induction of EDS1/PAD4 mediated HR and in accelerated cell death in the acd11 mutant. Not required for HR induction elicited through pathways exclusively dependent on CC-NB-LRR resistance proteins. The sequence is that of Protein LAZ1 from Arabidopsis thaliana (Mouse-ear cress).